The following is a 985-amino-acid chain: Phosphoenolpyruvate carboxylase (985 aa).

Low complexity predominate over residues 1–17 (MTQSAARRASSRATPAR). Positions 1 to 55 (MTQSAARRASSRATPARKTPPAPASQTPAPSPGGTAGTALGPTSRRSSGSAAAKD) are disordered. Catalysis depends on residues His-193 and Lys-634.

The protein belongs to the PEPCase type 1 family. Requires Mg(2+) as cofactor.

It catalyses the reaction oxaloacetate + phosphate = phosphoenolpyruvate + hydrogencarbonate. In terms of biological role, forms oxaloacetate, a four-carbon dicarboxylic acid source for the tricarboxylic acid cycle. The chain is Phosphoenolpyruvate carboxylase from Ralstonia nicotianae (strain ATCC BAA-1114 / GMI1000) (Ralstonia solanacearum).